Here is a 1027-residue protein sequence, read N- to C-terminus: INO80 complex subunit D (1027 aa).

Lysine 87 participates in a covalent cross-link: Glycyl lysine isopeptide (Lys-Gly) (interchain with G-Cter in SUMO2). Serine 132 is modified (phosphoserine). Disordered stretches follow at residues 193-278 (HFSP…VDPP), 519-574 (RGDN…LSMP), 813-850 (RQQYSSDHSHSSPHGSHYDSEHVPSPYSDHITSPHTTS), 914-969 (LSTS…TSPK), and 982-1027 (QLSS…PSPN). A compositionally biased stretch (low complexity) spans 201 to 216 (SQQQPPQQHSHLSPLS). Over residues 229 to 257 (VCKSPQPQNTSLPMQGVAPTTHTIAQARQ) the composition is skewed to polar residues. The span at 525-559 (KVQHQQQRKPRKKTKPPALTKKHKKKRRRGPRRPQ) shows a compositional bias: basic residues. Residues 914–932 (LSTSLSTPPTTSNSETTQP) show a composition bias toward low complexity. Residues 937-954 (VTPSSSSVLPGLPQTSFS) are compositionally biased toward polar residues. Low complexity predominate over residues 1001–1027 (APPTGFTVTGATATSTNNASSPFPSPN).

It belongs to the INO80D family. As to quaternary structure, component of the chromatin remodeling INO80 complex; specifically part of a complex module associated with the N-terminus of INO80.

It localises to the nucleus. Its function is as follows. Putative regulatory component of the chromatin remodeling INO80 complex which is involved in transcriptional regulation, DNA replication and probably DNA repair. The polypeptide is INO80 complex subunit D (Homo sapiens (Human)).